The sequence spans 130 residues: Large ribosomal subunit protein bL17 (130 aa).

Belongs to the bacterial ribosomal protein bL17 family. As to quaternary structure, part of the 50S ribosomal subunit. Contacts protein L32.

This chain is Large ribosomal subunit protein bL17, found in Delftia acidovorans (strain DSM 14801 / SPH-1).